Reading from the N-terminus, the 236-residue chain is 2-C-methyl-D-erythritol 4-phosphate cytidylyltransferase (236 aa).

This sequence belongs to the IspD/TarI cytidylyltransferase family. IspD subfamily. Homodimer.

It carries out the reaction 2-C-methyl-D-erythritol 4-phosphate + CTP + H(+) = 4-CDP-2-C-methyl-D-erythritol + diphosphate. Its pathway is isoprenoid biosynthesis; isopentenyl diphosphate biosynthesis via DXP pathway; isopentenyl diphosphate from 1-deoxy-D-xylulose 5-phosphate: step 2/6. In terms of biological role, catalyzes the formation of 4-diphosphocytidyl-2-C-methyl-D-erythritol from CTP and 2-C-methyl-D-erythritol 4-phosphate (MEP). In Escherichia coli O7:K1 (strain IAI39 / ExPEC), this protein is 2-C-methyl-D-erythritol 4-phosphate cytidylyltransferase.